We begin with the raw amino-acid sequence, 214 residues long: Neurogenin-3 (214 aa).

Residues 1 to 14 (MTPQPSGAPTVQVT) show a composition bias toward polar residues. Residues 1 to 98 (MTPQPSGAPT…NDRERNRMHN (98 aa)) form a disordered region. A compositionally biased stretch (basic and acidic residues) spans 15 to 26 (RETERSFPRASE). Composition is skewed to basic residues over residues 57–70 (APRK…GRSR) and 79–88 (KQRRSRRKKA). In terms of domain architecture, bHLH spans 83 to 135 (SRRKKANDRERNRMHNLNSALDALRGVLPTFPDDAKLTKIETLRFAHNYIWAL).

As to quaternary structure, efficient DNA binding requires dimerization with another bHLH protein. Interacts with ATOH8.

The protein localises to the nucleus. Functionally, acts as a transcriptional regulator. Together with NKX2-2, initiates transcriptional activation of NEUROD1. Involved in neurogenesis. Also required for the specification of a common precursor of the 4 pancreatic endocrine cell types. This Homo sapiens (Human) protein is Neurogenin-3 (NEUROG3).